A 422-amino-acid chain; its full sequence is UDP-N-acetylglucosamine 1-carboxyvinyltransferase (422 aa).

22–23 (KN) contributes to the phosphoenolpyruvate binding site. R94 contributes to the UDP-N-acetyl-alpha-D-glucosamine binding site. The active-site Proton donor is C118. 2-(S-cysteinyl)pyruvic acid O-phosphothioketal is present on C118. Residues 123 to 127 (RPIDL), D309, and L331 each bind UDP-N-acetyl-alpha-D-glucosamine.

Belongs to the EPSP synthase family. MurA subfamily.

The protein localises to the cytoplasm. The enzyme catalyses phosphoenolpyruvate + UDP-N-acetyl-alpha-D-glucosamine = UDP-N-acetyl-3-O-(1-carboxyvinyl)-alpha-D-glucosamine + phosphate. It functions in the pathway cell wall biogenesis; peptidoglycan biosynthesis. Cell wall formation. Adds enolpyruvyl to UDP-N-acetylglucosamine. This is UDP-N-acetylglucosamine 1-carboxyvinyltransferase from Sulfurimonas denitrificans (strain ATCC 33889 / DSM 1251) (Thiomicrospira denitrificans (strain ATCC 33889 / DSM 1251)).